Reading from the N-terminus, the 69-residue chain is MHLWQLVLLVILFFGAAFGADLEGSGSGDVSTDAKEAILNAQTLLDAVSSDGSGADVEASGEDVQTFFF.

An N-terminal signal peptide occupies residues 1-19 (MHLWQLVLLVILFFGAAFG). 2 O-linked (Xyl...) (chondroitin sulfate) serine glycosylation sites follow: S25 and S27.

This chain is Chondroitin proteoglycan 9, found in Caenorhabditis elegans.